The primary structure comprises 222 residues: Phosphoglycolate phosphatase (222 aa).

Catalysis depends on Asp-8, which acts as the Nucleophile. Positions 8 and 10 each coordinate Mg(2+). Residue Lys-146 participates in substrate binding. Positions 169 and 173 each coordinate Mg(2+).

It belongs to the archaeal SPP-like hydrolase family. It depends on Mg(2+) as a cofactor.

The enzyme catalyses 2-phosphoglycolate + H2O = glycolate + phosphate. Catalyzes the dephosphorylation of 2-phosphoglycolate. The protein is Phosphoglycolate phosphatase of Methanothrix thermoacetophila (strain DSM 6194 / JCM 14653 / NBRC 101360 / PT) (Methanosaeta thermophila).